The sequence spans 249 residues: 1-(5-phosphoribosyl)-5-[(5-phosphoribosylamino)methylideneamino] imidazole-4-carboxamide isomerase (249 aa).

Catalysis depends on Asp8, which acts as the Proton acceptor. Asp130 serves as the catalytic Proton donor.

The protein belongs to the HisA/HisF family.

The protein localises to the cytoplasm. The enzyme catalyses 1-(5-phospho-beta-D-ribosyl)-5-[(5-phospho-beta-D-ribosylamino)methylideneamino]imidazole-4-carboxamide = 5-[(5-phospho-1-deoxy-D-ribulos-1-ylimino)methylamino]-1-(5-phospho-beta-D-ribosyl)imidazole-4-carboxamide. The protein operates within amino-acid biosynthesis; L-histidine biosynthesis; L-histidine from 5-phospho-alpha-D-ribose 1-diphosphate: step 4/9. In Nitrosococcus oceani (strain ATCC 19707 / BCRC 17464 / JCM 30415 / NCIMB 11848 / C-107), this protein is 1-(5-phosphoribosyl)-5-[(5-phosphoribosylamino)methylideneamino] imidazole-4-carboxamide isomerase.